We begin with the raw amino-acid sequence, 68 residues long: Molybdenum-pterin-binding protein 3 (68 aa).

One can recognise a Mop domain in the interval 2-68; sequence SISARNQLKG…IKSTDVMILA (67 aa).

Functionally, binds one mole of molybdenum per mole of protein and contains a pterin. The polypeptide is Molybdenum-pterin-binding protein 3 (mopIII) (Clostridium pasteurianum).